The following is a 134-amino-acid chain: Small ribosomal subunit protein uS8 (134 aa).

It belongs to the universal ribosomal protein uS8 family. In terms of assembly, part of the 30S ribosomal subunit. Contacts proteins S5 and S12.

One of the primary rRNA binding proteins, it binds directly to 16S rRNA central domain where it helps coordinate assembly of the platform of the 30S subunit. The polypeptide is Small ribosomal subunit protein uS8 (Synechococcus sp. (strain JA-3-3Ab) (Cyanobacteria bacterium Yellowstone A-Prime)).